The primary structure comprises 261 residues: 1-(5-phosphoribosyl)-5-[(5-phosphoribosylamino)methylideneamino] imidazole-4-carboxamide isomerase (261 aa).

The Proton acceptor role is filled by Asp-7. Asp-129 acts as the Proton donor in catalysis.

This sequence belongs to the HisA/HisF family.

The protein localises to the cytoplasm. The enzyme catalyses 1-(5-phospho-beta-D-ribosyl)-5-[(5-phospho-beta-D-ribosylamino)methylideneamino]imidazole-4-carboxamide = 5-[(5-phospho-1-deoxy-D-ribulos-1-ylimino)methylamino]-1-(5-phospho-beta-D-ribosyl)imidazole-4-carboxamide. Its pathway is amino-acid biosynthesis; L-histidine biosynthesis; L-histidine from 5-phospho-alpha-D-ribose 1-diphosphate: step 4/9. This Colwellia psychrerythraea (strain 34H / ATCC BAA-681) (Vibrio psychroerythus) protein is 1-(5-phosphoribosyl)-5-[(5-phosphoribosylamino)methylideneamino] imidazole-4-carboxamide isomerase.